Consider the following 76-residue polypeptide: DNA polymerase III subunit theta (76 aa).

The DNA polymerase holoenzyme is a complex that contains 10 different types of subunits. These subunits are organized into 3 functionally essential subassemblies: the pol III core, the beta sliding clamp processivity factor and the clamp-loading complex. The pol III core (subunits alpha,epsilon and theta) contains the polymerase and the 3'-5' exonuclease proofreading activities. The polymerase is tethered to the template via the sliding clamp processivity factor. The clamp-loading complex assembles the beta processivity factor onto the primer template and plays a central role in the organization and communication at the replication fork. This complex contains delta, delta', psi and chi, and copies of either or both of two different DnaX proteins, gamma and tau. The composition of the holoenzyme is, therefore: (alpha,epsilon,theta)[2]-(gamma/tau)[3]-delta,delta', psi,chi-beta[4].

The catalysed reaction is DNA(n) + a 2'-deoxyribonucleoside 5'-triphosphate = DNA(n+1) + diphosphate. Functionally, DNA polymerase III is a complex, multichain enzyme responsible for most of the replicative synthesis in bacteria. This DNA polymerase also exhibits 3' to 5' exonuclease activity. The exact function of the theta subunit is unknown. The polypeptide is DNA polymerase III subunit theta (holE) (Escherichia coli O157:H7).